The primary structure comprises 394 residues: Phosphoglycerate kinase (394 aa).

Substrate contacts are provided by residues 21–23, Arg-36, 59–62, Arg-118, and Arg-151; these read DFN and HLGR. Position 183 is a phosphoserine (Ser-183). Residues Lys-201 and Gly-292 each coordinate ATP. Thr-299 carries the phosphothreonine modification. Residues Glu-323 and 350-353 each bind ATP; that span reads GGDS.

It belongs to the phosphoglycerate kinase family. In terms of assembly, monomer.

The protein localises to the cytoplasm. It catalyses the reaction (2R)-3-phosphoglycerate + ATP = (2R)-3-phospho-glyceroyl phosphate + ADP. Its pathway is carbohydrate degradation; glycolysis; pyruvate from D-glyceraldehyde 3-phosphate: step 2/5. The sequence is that of Phosphoglycerate kinase from Bacillus cereus (strain ZK / E33L).